Here is a 1250-residue protein sequence, read N- to C-terminus: Nucleoporin pom152 (1250 aa).

The interval 1–79 (MVTRVASSER…IYLRLLPKFR (79 aa)) is pore side. A helical transmembrane segment spans residues 80–100 (IPWLSFQPAATLLQIAIFAAI). A cisternal side region spans residues 101 to 1250 (NLLLSSLSSL…PQDSTSSSNI (1150 aa)).

As to quaternary structure, component of the nuclear pore complex (NPC). NPC constitutes the exclusive means of nucleocytoplasmic transport. NPCs allow the passive diffusion of ions and small molecules and the active, nuclear transport receptor-mediated bidirectional transport of macromolecules such as proteins, RNAs, ribonucleoparticles (RNPs), and ribosomal subunits across the nuclear envelope.

The protein localises to the nucleus. It is found in the nuclear pore complex. Its subcellular location is the nucleus membrane. Functionally, functions as a component of the nuclear pore complex (NPC). NPC components, collectively referred to as nucleoporins (NUPs), can play the role of both NPC structural components and of docking or interaction partners for transiently associated nuclear transport factors. The chain is Nucleoporin pom152 (pom152) from Schizosaccharomyces pombe (strain 972 / ATCC 24843) (Fission yeast).